We begin with the raw amino-acid sequence, 266 residues long: Sesquipedalian-1 (266 aa).

The PH domain occupies 17-113 (PVDNAGFLYK…WVKALSRASF (97 aa)). The disordered stretch occupies residues 165-184 (QPSVAPQRPPPLPPRRRASA). Ser-183 is modified (phosphoserine). The F&amp;H signature appears at 191-203 (SFAQLHARYGLEV).

It belongs to the sesquipedalian family. Forms homodimers and heterodimers with PHETA2. Interacts with OCRL and INPP5B. Interaction with OCRL may be important for endosomal morphology and function.

The protein resides in the early endosome. It localises to the recycling endosome. The protein localises to the golgi apparatus. Its subcellular location is the trans-Golgi network. It is found in the cytoplasmic vesicle. The protein resides in the clathrin-coated vesicle. Functionally, plays a role in endocytic trafficking. Required for receptor recycling from endosomes, both to the trans-Golgi network and the plasma membrane. The chain is Sesquipedalian-1 from Mus musculus (Mouse).